The chain runs to 82 residues: uncharacterized protein (82 aa).

The next 2 helical transmembrane spans lie at 22–39 (WASD…MFIA) and 46–65 (LKMG…TWVI).

The protein resides in the cell membrane. This is an uncharacterized protein from Bacillus subtilis (strain 168).